The sequence spans 76 residues: Alpha-amylase inhibitor Z-2685 (76 aa).

2 cysteine pairs are disulfide-bonded: C9-C25 and C43-C70.

Inhibits mammalian alpha-amylases specifically but has no action on plant and microbial alpha-amylases. The chain is Alpha-amylase inhibitor Z-2685 from Streptomyces rochei (Streptomyces parvullus).